Reading from the N-terminus, the 419-residue chain is Glutamyl-tRNA reductase (419 aa).

Substrate-binding positions include 49–52 (TCNR), Ser-107, 112–114 (EPQ), and Gln-118. The active-site Nucleophile is the Cys-50. 187-192 (GAGETI) contributes to the NADP(+) binding site.

It belongs to the glutamyl-tRNA reductase family. Homodimer.

The catalysed reaction is (S)-4-amino-5-oxopentanoate + tRNA(Glu) + NADP(+) = L-glutamyl-tRNA(Glu) + NADPH + H(+). It participates in porphyrin-containing compound metabolism; protoporphyrin-IX biosynthesis; 5-aminolevulinate from L-glutamyl-tRNA(Glu): step 1/2. Catalyzes the NADPH-dependent reduction of glutamyl-tRNA(Glu) to glutamate 1-semialdehyde (GSA). This chain is Glutamyl-tRNA reductase, found in Vibrio atlanticus (strain LGP32) (Vibrio splendidus (strain Mel32)).